A 136-amino-acid polypeptide reads, in one-letter code: MARKIFKFRGYTLEELQEMSLDEVIELLPSRQRRSLKRGFLPRQEKVLDKMEKVKDMKNDSGRPIVIKTHCRDMIVLPNMVGYTFGIYNGQEFVEVTIQPEMIGCYFGEFAQTRGRVQHGDPGMGATRSSMFVPLK.

It belongs to the universal ribosomal protein uS19 family.

Its function is as follows. Protein S19 forms a complex with S13 that binds strongly to the 16S ribosomal RNA. This is Small ribosomal subunit protein uS19 from Methanosphaera stadtmanae (strain ATCC 43021 / DSM 3091 / JCM 11832 / MCB-3).